Reading from the N-terminus, the 324-residue chain is PTS system glucose-specific EIICBA component (324 aa).

In terms of domain architecture, PTS EIIC type-1 spans 1 to 63 (HLLNVKIGMT…KWDLATPGRE (63 aa)). 2 helical membrane passes run 5–25 (VKIG…GVLP) and 28–48 (TAWW…YFGF). Positions 78 to 159 (GDLPYEVLAA…QDIMQGKAPA (82 aa)) constitute a PTS EIIB type-1 domain. Cys100 (phosphocysteine intermediate; for EIIB activity) is an active-site residue. Positions 156–177 (KAPARAEEKPKTAASEAAESET) are disordered. A compositionally biased stretch (low complexity) spans 167-177 (TAASEAAESET). A PTS EIIA type-1 domain is found at 194-298 (DQVFSQKMMG…SIVTPVIFTN (105 aa)). Residue His246 is the Tele-phosphohistidine intermediate; for EIIA activity of the active site.

The protein resides in the cell membrane. The enzyme catalyses N(pros)-phospho-L-histidyl-[protein] + D-glucose(out) = D-glucose 6-phosphate(in) + L-histidyl-[protein]. The phosphoenolpyruvate-dependent sugar phosphotransferase system (sugar PTS), a major carbohydrate active transport system, catalyzes the phosphorylation of incoming sugar substrates concomitantly with their translocation across the cell membrane. This system is involved in glucose transport. This chain is PTS system glucose-specific EIICBA component (ptsG), found in Geobacillus stearothermophilus (Bacillus stearothermophilus).